Consider the following 201-residue polypeptide: RILP-like protein 2 (201 aa).

In terms of domain architecture, RH1 spans 14 to 108; the sequence is SPEMALDKDP…LRDGPQMGVG (95 aa). Residues 67–155 are a coiled coil; sequence LEMLEALVNQ…AQDELQCYKS (89 aa). An RH2 domain is found at 121–197; it reads RPRFTLQELR…TVKSLFSFKQ (77 aa). The segment at 175–201 is disordered; it reads TSSPRSNASKEKSTVKSLFSFKQGKNT.

This sequence belongs to the RILPL family.

It localises to the cytoplasm. It is found in the cytosol. Its subcellular location is the cytoskeleton. The protein localises to the microtubule organizing center. The protein resides in the centrosome. It localises to the cell projection. It is found in the cilium. Functionally, involved in cell shape and neuronal morphogenesis, positively regulating the establishment and maintenance of dendritic spines. Plays a role in cellular protein transport. In Xenopus laevis (African clawed frog), this protein is RILP-like protein 2 (rilpl2).